Consider the following 309-residue polypeptide: THO complex subunit Tho3 (309 aa).

6 WD repeats span residues 22-61, 65-107, 109-148, 192-231, 234-273, and 275-309; these read GQQGPIRSLGWNLSGSRLASSSSSGSVLVWNSDRLDFKFT, GNRG…PIAE, ESNYENIYATWSPSGNYCCASSRDDMLSFIDARERRIMET, AHNSNCFCIEFSPDNRHLAIGGADAITSLWDPQELICERS, RMDYPIRTLSFSYDSRYLASGSEDRYVDIADTKTGDQIWK, and PTNGPLNKVAWHPTKHILAYAVSEPNSSGLKIFGL.

Belongs to the THOC3 family. Component of the transcription/export (TREX) complex, which is at least is formed of SUB2, TEX1 and YRA1 and the THO complex composed of HPR1, MFT1, THO2 and THP1.

It localises to the nucleus. Its function is as follows. Component of the TREX complex, which operates in coupling transcription elongation to mRNA export. This is THO complex subunit Tho3 (THO3) from Schizosaccharomyces pombe (strain 972 / ATCC 24843) (Fission yeast).